A 284-amino-acid polypeptide reads, in one-letter code: Tropomyosin Tod p 1.0102 (284 aa).

Residues Lys15–Glu273 adopt a coiled-coil conformation. A disordered region spans residues Glu103–Gly136.

Belongs to the tropomyosin family. As to quaternary structure, homodimer. In terms of processing, the N-terminus is blocked. In terms of tissue distribution, expressed in mantle muscle (at protein level).

Tropomyosin, in association with the troponin complex, plays a central role in the calcium dependent regulation of muscle contraction. The chain is Tropomyosin Tod p 1.0102 from Todarodes pacificus (Japanese flying squid).